Here is a 145-residue protein sequence, read N- to C-terminus: Transcription antitermination protein NusB (145 aa).

Belongs to the NusB family.

Its function is as follows. Involved in transcription antitermination. Required for transcription of ribosomal RNA (rRNA) genes. Binds specifically to the boxA antiterminator sequence of the ribosomal RNA (rrn) operons. The chain is Transcription antitermination protein NusB from Burkholderia mallei (strain NCTC 10247).